The primary structure comprises 462 residues: Argininosuccinate lyase (462 aa).

The protein belongs to the lyase 1 family. Argininosuccinate lyase subfamily.

It localises to the cytoplasm. It carries out the reaction 2-(N(omega)-L-arginino)succinate = fumarate + L-arginine. Its pathway is amino-acid biosynthesis; L-arginine biosynthesis; L-arginine from L-ornithine and carbamoyl phosphate: step 3/3. This is Argininosuccinate lyase from Bacillus cereus (strain ATCC 10987 / NRS 248).